Here is a 601-residue protein sequence, read N- to C-terminus: Elongation factor 4 (601 aa).

One can recognise a tr-type G domain in the interval 2-184; that stretch reads DLIRNFSIIA…EMIARVPPPT (183 aa). GTP-binding positions include 14-19 and 131-134; these read DHGKST and NKID.

It belongs to the TRAFAC class translation factor GTPase superfamily. Classic translation factor GTPase family. LepA subfamily.

Its subcellular location is the cell inner membrane. The catalysed reaction is GTP + H2O = GDP + phosphate + H(+). Its function is as follows. Required for accurate and efficient protein synthesis under certain stress conditions. May act as a fidelity factor of the translation reaction, by catalyzing a one-codon backward translocation of tRNAs on improperly translocated ribosomes. Back-translocation proceeds from a post-translocation (POST) complex to a pre-translocation (PRE) complex, thus giving elongation factor G a second chance to translocate the tRNAs correctly. Binds to ribosomes in a GTP-dependent manner. The sequence is that of Elongation factor 4 from Polynucleobacter necessarius subsp. necessarius (strain STIR1).